The primary structure comprises 128 residues: Ribonuclease P protein component (128 aa).

This sequence belongs to the RnpA family. In terms of assembly, consists of a catalytic RNA component (M1 or rnpB) and a protein subunit.

The enzyme catalyses Endonucleolytic cleavage of RNA, removing 5'-extranucleotides from tRNA precursor.. RNaseP catalyzes the removal of the 5'-leader sequence from pre-tRNA to produce the mature 5'-terminus. It can also cleave other RNA substrates such as 4.5S RNA. The protein component plays an auxiliary but essential role in vivo by binding to the 5'-leader sequence and broadening the substrate specificity of the ribozyme. In Prochlorococcus marinus (strain NATL2A), this protein is Ribonuclease P protein component.